We begin with the raw amino-acid sequence, 147 residues long: Hemoglobin subunit beta (147 aa).

A Globin domain is found at 3–147; it reads HWTAEEKQLI…VAHALARKYH (145 aa). Histidine 64 and histidine 93 together coordinate heme b.

This sequence belongs to the globin family. Heterotetramer of 2 alpha (or alpha-D) and 2 beta chains. In terms of tissue distribution, red blood cells.

Involved in oxygen transport from the lung to the various peripheral tissues. The beta chain is a component of adult hemoglobin A and D. The sequence is that of Hemoglobin subunit beta (HBB) from Gallus gallus (Chicken).